A 201-amino-acid chain; its full sequence is Myosin regulatory light chain 2 (201 aa).

Residues 1 to 48 are disordered; it reads MADKDKKVKKKKAKEDAPAEEAPAAAAPAGDRQSSRGSRKAKRTGSNV. The segment covering 20-29 has biased composition (low complexity); that stretch reads EEAPAAAAPA. At serine 46 the chain carries Phosphoserine. 3 consecutive EF-hand domains span residues 55–90, 125–158, and 159–194; these read KQVAEFKEAFQLMDHDKDGIIGKNDLRATFDSLGRL, DEDDVVINAFKTFDEEGKIDSERLRHALMTWGDK, and FSADEVDEAYDQMDIDDKGYIDTTKLIAMLTASAEE. Aspartate 68, aspartate 70, aspartate 72, and aspartate 79 together coordinate Ca(2+).

In terms of assembly, myosin is a hexamer of 2 heavy chains and 4 light chains.

In Bombyx mori (Silk moth), this protein is Myosin regulatory light chain 2.